The following is a 99-amino-acid chain: Glycine-rich protein (99 aa).

Positions 1–18 (MKSMIAVLLLALVATSMA) are cleaved as a signal peptide.

This sequence belongs to the non-disulfide-bridged peptide (NDBP) superfamily. Expressed by the venom gland.

It is found in the secreted. This is Glycine-rich protein from Lychas mucronatus (Chinese swimming scorpion).